A 161-amino-acid chain; its full sequence is Phosphopantetheine adenylyltransferase (161 aa).

Position 9 (serine 9) interacts with substrate. ATP-binding positions include 9–10 (SF) and histidine 17. Substrate-binding residues include lysine 41, valine 73, and lysine 87. ATP contacts are provided by residues 88 to 90 (GLR), glutamate 98, and 122 to 128 (YSFVSSS).

This sequence belongs to the bacterial CoaD family. As to quaternary structure, homohexamer. Mg(2+) serves as cofactor.

The protein resides in the cytoplasm. It carries out the reaction (R)-4'-phosphopantetheine + ATP + H(+) = 3'-dephospho-CoA + diphosphate. The protein operates within cofactor biosynthesis; coenzyme A biosynthesis; CoA from (R)-pantothenate: step 4/5. Its function is as follows. Reversibly transfers an adenylyl group from ATP to 4'-phosphopantetheine, yielding dephospho-CoA (dPCoA) and pyrophosphate. The sequence is that of Phosphopantetheine adenylyltransferase from Mycobacterium bovis (strain ATCC BAA-935 / AF2122/97).